A 1349-amino-acid polypeptide reads, in one-letter code: Membrane-associated phosphatidylinositol transfer protein 2 (1349 aa).

A disordered region spans residues 262–344; it reads EDGEEATELV…RDSDESSDDE (83 aa). Low complexity predominate over residues 302 to 322; the sequence is KQWSTSSKSSRSSKRGASPSR. Phosphoserine is present on residues Ser337, Ser341, Ser368, and Ser589. Gly residues predominate over residues 618-631; that stretch reads GGGGGSSGGGGSSG. Residues 618–671 form a disordered region; the sequence is GGGGGSSGGGGSSGGSSLESSRHLSRSNVDIPRSNGTEDPKRQLPRKRSDSSTY. Ser644 bears the Phosphoserine mark. Over residues 653-667 the composition is skewed to basic and acidic residues; the sequence is GTEDPKRQLPRKRSD. Ser700, Ser701, and Ser702 each carry phosphoserine. Positions 715-963 constitute a DDHD domain; the sequence is FDFEITDLFL…VSFLLRQVMR (249 aa). Position 828 is an omega-N-methylarginine (Arg828). The disordered stretch occupies residues 876–900; that stretch reads LPAPSPTTPGPHPPARKASPGLERA. The segment covering 878–888 has biased composition (pro residues); sequence APSPTTPGPHP. The residue at position 1277 (Ser1277) is a Phosphoserine. A disordered region spans residues 1296 to 1326; sequence TISAQPSGPSHRHERTQSQADGEQRGQRSMS.

It belongs to the PtdIns transfer protein family. PI transfer class IIA subfamily. As to quaternary structure, interacts with PTK2B via its C-terminus. Interacts with CPNE4 (via VWFA domain). As to expression, highly expressed in brain, heart, ovary, testis and thymus. Detected in small intestine, prostate, pancreas, skeletal muscle, liver, colon and placenta.

It is found in the endomembrane system. Its function is as follows. Catalyzes the transfer of phosphatidylinositol and phosphatidylcholine between membranes (in vitro). Binds calcium ions. The protein is Membrane-associated phosphatidylinositol transfer protein 2 (PITPNM2) of Homo sapiens (Human).